Reading from the N-terminus, the 466-residue chain is Ribulose bisphosphate carboxylase large chain (466 aa).

Lysine 5 carries the N6,N6,N6-trimethyllysine modification. The substrate site is built by asparagine 114 and threonine 164. The active-site Proton acceptor is lysine 166. Lysine 168 provides a ligand contact to substrate. Mg(2+) contacts are provided by lysine 192, aspartate 194, and glutamate 195. Lysine 192 is subject to N6-carboxylysine. The Proton acceptor role is filled by histidine 285. The substrate site is built by arginine 286, histidine 318, and serine 370.

The protein belongs to the RuBisCO large chain family. Type I subfamily. As to quaternary structure, heterohexadecamer of 8 large chains and 8 small chains; disulfide-linked. The disulfide link is formed within the large subunit homodimers. Mg(2+) is required as a cofactor. The disulfide bond which can form in the large chain dimeric partners within the hexadecamer appears to be associated with oxidative stress and protein turnover.

The protein resides in the plastid. It localises to the chloroplast. It catalyses the reaction 2 (2R)-3-phosphoglycerate + 2 H(+) = D-ribulose 1,5-bisphosphate + CO2 + H2O. The catalysed reaction is D-ribulose 1,5-bisphosphate + O2 = 2-phosphoglycolate + (2R)-3-phosphoglycerate + 2 H(+). In terms of biological role, ruBisCO catalyzes two reactions: the carboxylation of D-ribulose 1,5-bisphosphate, the primary event in carbon dioxide fixation, as well as the oxidative fragmentation of the pentose substrate in the photorespiration process. Both reactions occur simultaneously and in competition at the same active site. The polypeptide is Ribulose bisphosphate carboxylase large chain (Drosera binata (Fork-leaved sundew)).